The following is a 217-amino-acid chain: Ras-related protein RABA2a (217 aa).

Position 19-26 (19-26 (GDSGVGKS)) interacts with GTP. An Effector region motif is present at residues 41–49 (SKSTIGVEF). Residues 67–71 (DTAGQ), 125–128 (NKTD), and 155–156 (SA) contribute to the GTP site. Residue C213 is the site of S-palmitoyl cysteine attachment. A Cysteine methyl ester modification is found at C214. C214 carries the S-geranylgeranyl cysteine lipid modification. A propeptide spans 215-217 (SSS) (removed in mature form).

It belongs to the small GTPase superfamily. Rab family. In terms of tissue distribution, expressed in root tips.

The protein resides in the endosome membrane. The protein localises to the golgi apparatus. It is found in the trans-Golgi network membrane. Intracellular vesicle trafficking and protein transport. The polypeptide is Ras-related protein RABA2a (RABA2A) (Arabidopsis thaliana (Mouse-ear cress)).